A 378-amino-acid polypeptide reads, in one-letter code: MIHFSINKNLFLQALNTTKRAISSKNAIPILSTVKIDVTNEGITLIGSNGQISIENFISQKNEDAGLLITSLGSILLEASFFINVVSSLPDVTLDFKEIEQNQIVLTSGKSEITLKGKDSEQYPRIQEISASTPLILETKLLKKIINETAFAASTQESRPILTGVHFVLSQHKELKTVATDSHRLSQKKLTLEKNSDDFDVVIPSRSLREFSAVFTDDIETVEIFFANNQILFRSENISFYTRLLEGNYPDTDRLIPTDFNTTITFNVVNLRQSMERARLLSSATQNGTVKLEIKDGVVSAHVHSPEVGKVNEEIDTDQVTGEDLTISFNPTYLIDSLKALNSEKVTISFISAVRPFTLVPADTDEDFMQLITPVRTN.

This sequence belongs to the beta sliding clamp family. Forms a ring-shaped head-to-tail homodimer around DNA which binds and tethers DNA polymerases and other proteins to the DNA. The DNA replisome complex has a single clamp-loading complex (3 tau and 1 each of delta, delta', psi and chi subunits) which binds 3 Pol III cores (1 core on the leading strand and 2 on the lagging strand) each with a beta sliding clamp dimer. Additional proteins in the replisome are other copies of gamma, psi and chi, Ssb, DNA helicase and RNA primase.

It localises to the cytoplasm. Its function is as follows. Confers DNA tethering and processivity to DNA polymerases and other proteins. Acts as a clamp, forming a ring around DNA (a reaction catalyzed by the clamp-loading complex) which diffuses in an ATP-independent manner freely and bidirectionally along dsDNA. Initially characterized for its ability to contact the catalytic subunit of DNA polymerase III (Pol III), a complex, multichain enzyme responsible for most of the replicative synthesis in bacteria; Pol III exhibits 3'-5' exonuclease proofreading activity. The beta chain is required for initiation of replication as well as for processivity of DNA replication. This is Beta sliding clamp (dnaN) from Streptococcus pneumoniae serotype 4 (strain ATCC BAA-334 / TIGR4).